A 93-amino-acid chain; its full sequence is MDGIKYAVFTDKSIRLLGKNQYTSNVESGSTRTEIKHWVELFFGVKVIAMNSHRLPGKGRRMGPIMGHTMHYRRMIITLQPGYSIPPLRKKRT.

The protein belongs to the universal ribosomal protein uL23 family. Part of the 50S ribosomal subunit.

The protein localises to the plastid. The protein resides in the chloroplast. Its function is as follows. Binds to 23S rRNA. This Cucumis sativus (Cucumber) protein is Large ribosomal subunit protein uL23cz/uL23cy (rpl23-A).